Consider the following 430-residue polypeptide: Bone morphogenetic protein 7 (430 aa).

Positions 1–29 are cleaved as a signal peptide; the sequence is MHVRSLRAAAPHSFVALWAPLFLLRSALA. A propeptide spanning residues 30–291 is cleaved from the precursor; it reads DFSLDNEVHS…ATEVHLRSIR (262 aa). N-linked (GlcNAc...) asparagine glycans are attached at residues Asn186, Asn301, Asn320, and Asn371. The segment at 290-310 is disordered; it reads IRSTGGKQRSQNRSKTPKNQE. Intrachain disulfides connect Cys329–Cys395, Cys358–Cys427, and Cys362–Cys429.

Belongs to the TGF-beta family. Homodimer; disulfide-linked. Interacts with SOSTDC1. Interacts with TWSG1. Interacts with FBN1 (via N-terminal domain) and FBN2. Interacts with type I receptor ACVR1. Interacts with type II receptor ACVR2A. Interacts with NOG; this interaction inhibits canonical BMP signaling. Interacts with SCUBE3. Interacts with ERFE; the interaction inhibits BMP-induced transcription of HAMP. Interacts with TGFBR3.

Its subcellular location is the secreted. Growth factor of the TGF-beta superfamily that plays important role in various biological processes, including embryogenesis, hematopoiesis, neurogenesis and skeletal morphogenesis. Initiates the canonical BMP signaling cascade by associating with type I receptor ACVR1 and type II receptor ACVR2A. Once all three components are bound together in a complex at the cell surface, ACVR2A phosphorylates and activates ACVR1. In turn, ACVR1 propagates signal by phosphorylating SMAD1/5/8 that travel to the nucleus and act as activators and repressors of transcription of target genes. For specific functions such as growth cone collapse in developing spinal neurons and chemotaxis of monocytes, also uses BMPR2 as type II receptor. Can also signal through non-canonical pathways such as P38 MAP kinase signaling cascade that promotes brown adipocyte differentiation through activation of target genes, including members of the SOX family of transcription factors. Promotes the expression of HAMP, this is repressed by its interaction with ERFE. The sequence is that of Bone morphogenetic protein 7 (Bmp7) from Mus musculus (Mouse).